We begin with the raw amino-acid sequence, 172 residues long: Protein/nucleic acid deglycase 2 (172 aa).

The PfpI endopeptidase domain occupies 3-171; the sequence is KKIAVLITDE…FNREALRLLG (169 aa). Catalysis depends on cysteine 104, which acts as the Nucleophile.

The protein belongs to the peptidase C56 family. Exists in monomeric, trimeric, and hexameric forms.

Its subcellular location is the cytoplasm. It catalyses the reaction N(omega)-(1-hydroxy-2-oxopropyl)-L-arginyl-[protein] + H2O = lactate + L-arginyl-[protein] + H(+). The enzyme catalyses N(6)-(1-hydroxy-2-oxopropyl)-L-lysyl-[protein] + H2O = lactate + L-lysyl-[protein] + H(+). It carries out the reaction S-(1-hydroxy-2-oxopropyl)-L-cysteinyl-[protein] + H2O = lactate + L-cysteinyl-[protein] + H(+). The catalysed reaction is N(omega)-(1-hydroxy-2-oxoethyl)-L-arginyl-[protein] + H2O = L-arginyl-[protein] + glycolate + H(+). It catalyses the reaction N(6)-(1-hydroxy-2-oxoethyl)-L-lysyl-[protein] + H2O = glycolate + L-lysyl-[protein] + H(+). The enzyme catalyses S-(1-hydroxy-2-oxoethyl)-L-cysteinyl-[protein] + H2O = glycolate + L-cysteinyl-[protein] + H(+). It carries out the reaction N(2)-(1-hydroxy-2-oxopropyl)-dGTP + H2O = lactate + dGTP + H(+). The catalysed reaction is N(2)-(1-hydroxy-2-oxopropyl)-GTP + H2O = lactate + GTP + H(+). It catalyses the reaction N(2)-(1-hydroxy-2-oxopropyl)-GDP + H2O = lactate + GDP + H(+). The enzyme catalyses N(2)-(1-hydroxy-2-oxopropyl)-GMP + H2O = lactate + GMP + H(+). It carries out the reaction N(2)-(1-hydroxy-2-oxoethyl)-dGTP + H2O = dGTP + glycolate + H(+). The catalysed reaction is N(2)-(1-hydroxy-2-oxoethyl)-GTP + H2O = glycolate + GTP + H(+). It catalyses the reaction N(2)-(1-hydroxy-2-oxoethyl)-GDP + H2O = glycolate + GDP + H(+). The enzyme catalyses N(2)-(1-hydroxy-2-oxoethyl)-GMP + H2O = glycolate + GMP + H(+). It carries out the reaction an N(2)-(1-hydroxy-2-oxopropyl)-guanosine in RNA + H2O = a guanosine in RNA + lactate + H(+). The catalysed reaction is an N(2)-(1-hydroxy-2-oxopropyl)-2'-deoxyguanosine in DNA + H2O = a 2'-deoxyguanosine in DNA + lactate + H(+). It catalyses the reaction an N(2)-(1-hydroxy-2-oxoethyl)-guanosine in RNA + H2O = a guanosine in RNA + glycolate + H(+). The enzyme catalyses an N(2)-(1-hydroxy-2-oxoethyl)-2'-deoxyguanosine in DNA + H2O = a 2'-deoxyguanosine in DNA + glycolate + H(+). Its activity is regulated as follows. Glyoxalase activity is inhibited by zinc ions at pH 7.0. Its function is as follows. Protein and nucleotide deglycase that catalyzes the deglycation of the Maillard adducts formed between amino groups of proteins or nucleotides and reactive carbonyl groups of glyoxals. Thus, functions as a protein deglycase that repairs methylglyoxal- and glyoxal-glycated proteins, and releases repaired proteins and lactate or glycolate, respectively. Deglycates cysteine, arginine and lysine residues in proteins, and thus reactivates these proteins by reversing glycation by glyoxals. Is able to repair glycated serum albumin, collagen, glyceraldehyde-3-phosphate dehydrogenase, and fructose biphosphate aldolase. Acts on early glycation intermediates (hemithioacetals and aminocarbinols), preventing the formation of advanced glycation endproducts (AGE) that cause irreversible damage. Also functions as a nucleotide deglycase able to repair glycated guanine in the free nucleotide pool (GTP, GDP, GMP, dGTP) and in DNA and RNA. Is thus involved in a major nucleotide repair system named guanine glycation repair (GG repair), dedicated to reversing methylglyoxal and glyoxal damage via nucleotide sanitization and direct nucleic acid repair. In vitro, prevents acrylamide formation in asparagine/glyoxal and asparagine/sugar mixtures at 55 degrees Celsius, likely by degrading asparagine/glyoxal Maillard adducts formed at high temperatures. Also displays an apparent glyoxalase activity that in fact reflects its deglycase activity. Is a general stress protein; is required for the protection of bacterial cells against many environmental stresses, including oxidative, thermal, osmotic, UV, and pH stresses. And plays an important role in protection against electrophile/carbonyl stress. This chain is Protein/nucleic acid deglycase 2 (yhbO), found in Escherichia coli (strain K12).